Consider the following 858-residue polypeptide: Neural cell adhesion molecule 1 (858 aa).

The first 19 residues, 1-19 (MLQTKDLIWTLFFLGTAVS), serve as a signal peptide directing secretion. 5 consecutive Ig-like C2-type domains span residues 20–111 (LQVD…ATVN), 116–205 (QKLM…KDIQ), 212–301 (PTIQ…ATIH), 308–413 (PKIT…LEVQ), and 416–501 (PKLQ…ESLE). Residues 20 to 718 (LQVDIVPSQG…IPANGSPTSG (699 aa)) lie on the Extracellular side of the membrane. 2 cysteine pairs are disulfide-bonded: Cys-41-Cys-96 and Cys-139-Cys-189. Residue Asn-222 is glycosylated (N-linked (GlcNAc...) asparagine). The cysteines at positions 235 and 287 are disulfide-linked. 5 N-linked (GlcNAc...) asparagine glycosylation sites follow: Asn-315, Asn-347, Asn-433, Asn-459, and Asn-488. Cys-329 and Cys-395 are disulfide-bonded. The cysteines at positions 436 and 489 are disulfide-linked. 2 consecutive Fibronectin type-III domains span residues 509–608 (TPSS…TQPV) and 611–706 (EPSA…SAQP). A lipid anchor (GPI-anchor amidated asparagine) is attached at Pro-706. A helical transmembrane segment spans residues 719–739 (LSTGAIVGILIVIFVLLLVVV). Topologically, residues 740–858 (DITCYFLNKC…TQTKENESKA (119 aa)) are cytoplasmic. Ile-741 is lipidated: GPI-anchor amidated asparagine. The interval 766 to 858 (GAKGKDMEEG…TQTKENESKA (93 aa)) is disordered. Composition is skewed to basic and acidic residues over residues 768-809 (KGKD…HTEP) and 817-834 (EPEK…ETET). Phosphoserine is present on residues Ser-780 and Ser-784.

In terms of assembly, (Microbial infection) Interacts with rabies virus glycoprotein. As to quaternary structure, (Microbial infection) Interacts with Zika virus envelope protein E. Interacts with MDK. Found in a complex with SLC39A6, SLC39A10 and with NCAM1; this complex controls NCAM1 phosphorylation and integration into focal adhesion complexes during epithelial-tomesenchymal transition. Interacts with synaptic plasticity regulator PANTS. In terms of processing, polysialylated at Asn-459 and Asn-488 by ST8SIA2 and ST8SIA4. Polysialylation modulates cell interactions by confering both attractive and repulsive properties that are highly regulated by ST8SIA2 and ST8SIA4. Polysialylation is formed on a-2,3-linked sialic acid of core glycans.

The protein localises to the cell membrane. The protein resides in the secreted. In terms of biological role, this protein is a cell adhesion molecule involved in neuron-neuron adhesion, neurite fasciculation, outgrowth of neurites, etc. (Microbial infection) Acts as a receptor for rabies virus. Functionally, (Microbial infection) Acts as a receptor for Zika virus. The sequence is that of Neural cell adhesion molecule 1 from Homo sapiens (Human).